Here is a 732-residue protein sequence, read N- to C-terminus: Kell blood group glycoprotein (732 aa).

Residues methionine 1–glutamate 37 form a disordered region. Over methionine 1 to arginine 47 the chain is Cytoplasmic. Position 7 is a phosphoserine (serine 7). A helical; Signal-anchor for type II membrane protein membrane pass occupies residues valine 48 to tyrosine 67. Residues asparagine 68–tryptophan 732 are Extracellular-facing. Residues proline 76–tryptophan 732 enclose the Peptidase M13 domain. A disulfide bridge links cysteine 77 with cysteine 82. 2 N-linked (GlcNAc...) asparagine glycosylation sites follow: asparagine 94 and asparagine 115. 4 disulfide bridges follow: cysteine 100/cysteine 717, cysteine 108/cysteine 682, cysteine 155/cysteine 410, and cysteine 610/cysteine 729. Asparagine 191 is a glycosylation site (N-linked (GlcNAc...) asparagine; in KEL2 antigen). A glycan (N-linked (GlcNAc...) asparagine) is linked at asparagine 345. Position 581 (histidine 581) interacts with Zn(2+). Glutamate 582 is an active-site residue. Histidine 585 is a Zn(2+) binding site. An N-linked (GlcNAc...) asparagine glycan is attached at asparagine 627. Glutamate 634 contributes to the Zn(2+) binding site. Aspartate 638 functions as the Proton donor in the catalytic mechanism. A disordered region spans residues lysine 684–glycine 703.

It belongs to the peptidase M13 family. In terms of assembly, heterodimer with XK; disulfide-linked. Zn(2+) is required as a cofactor. In terms of processing, N-glycosylated. In terms of tissue distribution, expressed at high levels in erythrocytes and testis (in Sertoli cells), and, at lower levels, in skeletal muscle, tonsils (in follicular dendritic cells), lymph node, spleen and appendix (at protein level). Also expressed in many adult and fetal nonerythroid tissues, including brain, spleen, lymph nodes and bone marrow.

It is found in the cell membrane. Functionally, zinc endopeptidase with endothelin-3-converting enzyme activity. Cleaves EDN1, EDN2 and EDN3, with a marked preference for EDN3. The protein is Kell blood group glycoprotein (KEL) of Homo sapiens (Human).